The following is a 182-amino-acid chain: Isopentenyl-diphosphate Delta-isomerase (182 aa).

Mn(2+)-binding residues include histidine 25 and histidine 32. Residue cysteine 67 is part of the active site. Residue histidine 69 participates in Mn(2+) binding. Glutamate 87 serves as a coordination point for Mg(2+). Positions 114 and 116 each coordinate Mn(2+). The active site involves glutamate 116.

This sequence belongs to the IPP isomerase type 1 family. In terms of assembly, homodimer. Requires Mg(2+) as cofactor. Mn(2+) serves as cofactor.

It is found in the cytoplasm. It catalyses the reaction isopentenyl diphosphate = dimethylallyl diphosphate. It functions in the pathway isoprenoid biosynthesis; dimethylallyl diphosphate biosynthesis; dimethylallyl diphosphate from isopentenyl diphosphate: step 1/1. In terms of biological role, catalyzes the 1,3-allylic rearrangement of the homoallylic substrate isopentenyl (IPP) to its highly electrophilic allylic isomer, dimethylallyl diphosphate (DMAPP). The chain is Isopentenyl-diphosphate Delta-isomerase from Escherichia coli (strain K12 / MC4100 / BW2952).